Reading from the N-terminus, the 65-residue chain is Large ribosomal subunit protein bL35 (65 aa).

The protein belongs to the bacterial ribosomal protein bL35 family.

The chain is Large ribosomal subunit protein bL35 from Neisseria meningitidis serogroup A / serotype 4A (strain DSM 15465 / Z2491).